Here is a 22-residue protein sequence, read N- to C-terminus: Myofibril-bound serine protease (22 aa).

Residues isoleucine 1 to tyrosine 22 form the Peptidase S1 domain.

This sequence belongs to the peptidase S1 family. In terms of tissue distribution, detected in skeletal muscle (at protein level).

It localises to the cytoplasm. Its function is as follows. Serine protease which degrades the myosin heavy chain and tropomyosin, but not actin. Selectively cleaves Arg-|-Xaa bonds. In Saurida undosquamis (Brushtooth lizardfish), this protein is Myofibril-bound serine protease.